The primary structure comprises 156 residues: Endoribonuclease YbeY (156 aa).

Residues His122, His126, and His132 each contribute to the Zn(2+) site.

This sequence belongs to the endoribonuclease YbeY family. It depends on Zn(2+) as a cofactor.

It localises to the cytoplasm. Its function is as follows. Single strand-specific metallo-endoribonuclease involved in late-stage 70S ribosome quality control and in maturation of the 3' terminus of the 16S rRNA. The polypeptide is Endoribonuclease YbeY (Bacillus cereus (strain ATCC 10987 / NRS 248)).